Consider the following 599-residue polypeptide: DNA primase (599 aa).

The segment at 38 to 62 (CPFHDEKTPSFTVSEDKQICHCFGC) adopts a CHC2-type zinc-finger fold. Positions 260–341 (DEIVLLEGFM…NVFVIQLPSG (82 aa)) constitute a Toprim domain. Mg(2+) contacts are provided by E266, D310, and D312.

It belongs to the DnaG primase family. Monomer. Interacts with DnaB. It depends on Zn(2+) as a cofactor. Requires Mg(2+) as cofactor.

The enzyme catalyses ssDNA + n NTP = ssDNA/pppN(pN)n-1 hybrid + (n-1) diphosphate.. RNA polymerase that catalyzes the synthesis of short RNA molecules used as primers for DNA polymerase during DNA replication. In Staphylococcus aureus (strain MRSA252), this protein is DNA primase.